The sequence spans 391 residues: Polyisoprenyl-teichoic acid--peptidoglycan teichoic acid transferase TagV (391 aa).

The Cytoplasmic portion of the chain corresponds to 1–23; that stretch reads MAERVRVRVRKKKKSKRRKILKR. Residues 24 to 44 form a helical; Signal-anchor for type II membrane protein membrane-spanning segment; sequence IMLLFALALLVVVGLGGYKLY. Over 45–391 the chain is Extracellular; it reads KTINAADESY…TTNSTTDSSY (347 aa). The interval 329–391 is disordered; that stretch reads DYTPDTSTGT…TTNSTTDSSY (63 aa). Positions 333 to 391 are enriched in low complexity; it reads DTSTGTSGTEDGTDSSSSSGSTGSTGTTTDGTTNGSSYSNDSSTSSNNSTTNSTTDSSY.

The protein belongs to the LytR/CpsA/Psr (LCP) family.

It localises to the cell membrane. Its pathway is cell wall biogenesis. In terms of biological role, may catalyze the final step in cell wall teichoic acid biosynthesis, the transfer of the anionic cell wall polymers (APs) from their lipid-linked precursor to the cell wall peptidoglycan (PG). The protein is Polyisoprenyl-teichoic acid--peptidoglycan teichoic acid transferase TagV of Bacillus subtilis (strain 168).